Reading from the N-terminus, the 394-residue chain is MAFYSAGPLSPGYNSTSAWGGNDNAEEDPWAAPGSSSSAAPPTTSSGFAPSPPGGFASFSTQQQQQQQQQQQRQQAGYFGGAPAAGASLAQEADAYQDGLMETSFGVGSGAGQNRLGGAAATVNPQSPHNAHSSSSTYGSAISSTHSQPSTQSQQPQSHALPSSAAQAQAARAGAFPSGVSTSQYQPTSQGAQGASRFQSHTPSTLLPSEPAGFTSHTSSDYSATAPRQLAPGYPLPASNYTVPAYSPFARVDSLSTPRRETVEDMYGVPENFLEVEVRSPLTHGVGRKMYTDYEIVTRTNIPAFKLRYSSVRRRYSDFEYFRDILERESTRVNIPPLPGKVFTNRFTDEVIEARREGLERFLQVVAGHPLLQTGSKVMAAFLQDSGWSKDQWL.

2 disordered regions span residues Met1–Ala82 and Leu116–Ala226. Composition is skewed to low complexity over residues Ala31–Ala82 and Ala131–Ser178. A compositionally biased stretch (polar residues) spans Gly179–Leu207. Positions Asn272–Ser389 constitute a PX domain. Arg315, Ser317, Lys341, Arg346, and Arg355 together coordinate a 1,2-diacyl-sn-glycero-3-phospho-(1D-myo-inositol-3-phosphate).

It belongs to the sorting nexin family.

Its subcellular location is the cytoplasm. The protein localises to the golgi apparatus membrane. It is found in the prevacuolar compartment membrane. Required for retention of late Golgi membrane proteins. Component of the retrieval machinery that functions by direct interaction with the cytosolic tails of certain TGN membrane proteins during the sorting/budding process at the prevacuolar compartment. Binds phosphatidylinositol 3-phosphate (PtdIns(P3)). This chain is Sorting nexin-3 (SNX3), found in Mycosarcoma maydis (Corn smut fungus).